We begin with the raw amino-acid sequence, 629 residues long: Hemocyanin G chain (629 aa).

6 residues coordinate Cu cation: H171, H175, H202, H322, H326, and H362. N-linked (GlcNAc...) asparagine glycans are attached at residues N447 and N506. A disulfide bridge links C534 with C582. N615 is a glycosylation site (N-linked (GlcNAc...) asparagine).

It belongs to the tyrosinase family. Hemocyanin subfamily. As to quaternary structure, tarantula hemocyanin is a 24-chain polymer with seven different chains identified. Hemolymph.

It localises to the secreted. The protein localises to the extracellular space. Hemocyanins are copper-containing oxygen carriers occurring freely dissolved in the hemolymph of many mollusks and arthropods. The polypeptide is Hemocyanin G chain (HCG) (Aphonopelma sp. (American tarantula)).